We begin with the raw amino-acid sequence, 409 residues long: Peptidase T (409 aa).

Residue histidine 78 coordinates Zn(2+). Residue aspartate 80 is part of the active site. Residue aspartate 140 participates in Zn(2+) binding. Glutamate 173 acts as the Proton acceptor in catalysis. Residues glutamate 174, aspartate 196, and histidine 379 each coordinate Zn(2+).

This sequence belongs to the peptidase M20B family. Zn(2+) is required as a cofactor.

It localises to the cytoplasm. The catalysed reaction is Release of the N-terminal residue from a tripeptide.. Cleaves the N-terminal amino acid of tripeptides. This Salmonella dublin (strain CT_02021853) protein is Peptidase T.